A 611-amino-acid polypeptide reads, in one-letter code: Dehydrogenase pkfF (611 aa).

The N-terminal stretch at 1-19 (MRHTALLPLVSSFIVPALA) is a signal peptide. N-linked (GlcNAc...) asparagine glycans are attached at residues N28 and N38. Residues 50-51 (TS), 71-72 (EA), and 137-140 (HYMV) contribute to the FAD site. 6 N-linked (GlcNAc...) asparagine glycosylation sites follow: N180, N187, N240, N272, N409, and N471. H547 serves as the catalytic Proton acceptor. FAD-binding positions include A581 and 592-593 (PQ).

Belongs to the GMC oxidoreductase family. Requires FAD as cofactor.

Its pathway is secondary metabolite biosynthesis. In terms of biological role, dehydrogenase; part of the gene cluster that mediates the biosynthesis of aspernidine A, a prenylated isoindolinone. The starting point of the biosynthesis of aspernidin A is the production of orsellinaldehyde by the non-reducing polyketide synthase pkfA. Hydroxylation, methylation of one of the phenol groups, and prenylation, presumably catalyzed by the prenyltransferase pkfE, would be needed to yield aspernidine D. Subsequently, the cytochrome P450 monooxygenase pkfB is responsible for hydroxylation of aspernidine D to yield aspernidine E. The dehydrogenase pkfF may be responsible for further oxidation of aspernidine E to form a dialdehyde intermediate which is further transformed in a series of steps, some of which are enzyme-mediated, to generate aspernidine A. The possibility that additional enzymes outside of the cluster are involved in aspernidine A biosynthesis cannot be excluded. The sequence is that of Dehydrogenase pkfF from Emericella nidulans (strain FGSC A4 / ATCC 38163 / CBS 112.46 / NRRL 194 / M139) (Aspergillus nidulans).